We begin with the raw amino-acid sequence, 436 residues long: Trigger factor (436 aa).

In terms of domain architecture, PPIase FKBP-type spans 162 to 247 (GDRVIIDFEG…LNNVSEPTLP (86 aa)).

This sequence belongs to the FKBP-type PPIase family. Tig subfamily.

It is found in the cytoplasm. It carries out the reaction [protein]-peptidylproline (omega=180) = [protein]-peptidylproline (omega=0). Functionally, involved in protein export. Acts as a chaperone by maintaining the newly synthesized protein in an open conformation. Functions as a peptidyl-prolyl cis-trans isomerase. The chain is Trigger factor from Neisseria gonorrhoeae (strain ATCC 700825 / FA 1090).